The chain runs to 404 residues: MKLPIYLDYAATTPVDPRVAEKMFQCMTMDGIFGNPASRSHRYGWQAEEAVDIARNQIAELINADHREIVFTSGATESNNLAIKGVAHFYHKKGKHIITSKTEHKAVLDTCRQLEREGFEVTYLEPAANGIIPMERLETAMRDDTILVSIMHVNNEIGVIHDIDAIGELCRSKGIIFHMDAAQSAGKVPIDVQATKVDLISISGHKMYGPKGIGALYVRRKPRIRLEAQMHGGGHERGMRSGTLPTHQIVGLGEAAAIAKAEMASDDARIGALRDKLWNGIKHIEETYINGDAIERVSGSLNVSFNYVEGESLMMALKDLAVSSGSACTSASLEPSYVLRALGLNDEMAHSSIRFSIGRFTTEEEIDHAIEVITQSIDKLREMSPLWEMFKDGIDLNQVQWAHH.

Residues 75–76 (AT), N155, Q183, and 203–205 (SGH) contribute to the pyridoxal 5'-phosphate site. K206 bears the N6-(pyridoxal phosphate)lysine mark. T243 lines the pyridoxal 5'-phosphate pocket. The active-site Cysteine persulfide intermediate is C328. C328 serves as a coordination point for [2Fe-2S] cluster.

This sequence belongs to the class-V pyridoxal-phosphate-dependent aminotransferase family. NifS/IscS subfamily. Homodimer. Forms a heterotetramer with IscU, interacts with other sulfur acceptors. Pyridoxal 5'-phosphate is required as a cofactor.

Its subcellular location is the cytoplasm. The enzyme catalyses (sulfur carrier)-H + L-cysteine = (sulfur carrier)-SH + L-alanine. The protein operates within cofactor biosynthesis; iron-sulfur cluster biosynthesis. Master enzyme that delivers sulfur to a number of partners involved in Fe-S cluster assembly, tRNA modification or cofactor biosynthesis. Catalyzes the removal of elemental sulfur atoms from cysteine to produce alanine. Functions as a sulfur delivery protein for Fe-S cluster synthesis onto IscU, an Fe-S scaffold assembly protein, as well as other S acceptor proteins. This chain is Cysteine desulfurase IscS, found in Shewanella baltica (strain OS155 / ATCC BAA-1091).